The chain runs to 79 residues: Small ribosomal subunit protein bS16 (79 aa).

The protein belongs to the bacterial ribosomal protein bS16 family.

The sequence is that of Small ribosomal subunit protein bS16 from Solidesulfovibrio magneticus (strain ATCC 700980 / DSM 13731 / RS-1) (Desulfovibrio magneticus).